The chain runs to 244 residues: rRNA adenine N-6-methyltransferase (244 aa).

Residues asparagine 11, isoleucine 13, glycine 38, glutamate 59, aspartate 84, and asparagine 101 each coordinate S-adenosyl-L-methionine.

It belongs to the class I-like SAM-binding methyltransferase superfamily. rRNA adenine N(6)-methyltransferase family.

It catalyses the reaction adenosine(2085) in 23S rRNA + 2 S-adenosyl-L-methionine = N(6)-dimethyladenosine(2085) in 23S rRNA + 2 S-adenosyl-L-homocysteine + 2 H(+). Its function is as follows. This protein produces a dimethylation of the adenine residue at position 2085 in 23S rRNA, resulting in reduced affinity between ribosomes and macrolide-lincosamide-streptogramin B antibiotics. The protein is rRNA adenine N-6-methyltransferase (ermC) of Staphylococcus aureus.